Consider the following 776-residue polypeptide: Endonuclease MutS2 (776 aa).

Position 328–335 (328–335 (GPNTGGKT)) interacts with ATP. The Smr domain maps to 701-776 (LDLRGKRYEE…GSGATIVTFK (76 aa)).

Belongs to the DNA mismatch repair MutS family. MutS2 subfamily. In terms of assembly, homodimer. Binds to stalled ribosomes, contacting rRNA.

In terms of biological role, endonuclease that is involved in the suppression of homologous recombination and thus may have a key role in the control of bacterial genetic diversity. Its function is as follows. Acts as a ribosome collision sensor, splitting the ribosome into its 2 subunits. Detects stalled/collided 70S ribosomes which it binds and splits by an ATP-hydrolysis driven conformational change. Acts upstream of the ribosome quality control system (RQC), a ribosome-associated complex that mediates the extraction of incompletely synthesized nascent chains from stalled ribosomes and their subsequent degradation. Probably generates substrates for RQC. This is Endonuclease MutS2 from Streptococcus mutans serotype c (strain ATCC 700610 / UA159).